A 201-amino-acid chain; its full sequence is Sterile alpha motif domain-containing protein 12 (201 aa).

In terms of domain architecture, SAM spans 77–143 (WTQQDVCKWL…LQQVLQLKVR (67 aa)).

As to expression, expressed in the brain.

In Homo sapiens (Human), this protein is Sterile alpha motif domain-containing protein 12 (SAMD12).